The chain runs to 403 residues: MKLPIYLDYSSTTPVDPRVAEKMMQYLTPGGEFGNPASRSHRFGWHAEEAVDVAREQIADLISGDPREIVFTSGATESNNLAIKGAAHFYVKKGKHIITAKTEHKAVLDTCRQLEREGYEVTYLDPKEDGIVTPQQLKEVLRPDTVLVSLMHVNNEIGVIQDIAGFGELCRANKTIFHVDASQSVGKIEIDTQALKVDLMSFSAHKIYGPKGIGALYVSRKPRVRLEAQMHGGGHERGMRSGTLPTHQIAAMGEAFRIAKEEMASDEVRILALRTRLLNGVNDMEEVYVNGSLENRIAGNINISFNYVEGESLVMALKDLAVSSGSACTSASLEPSYVLRAIGRDDELAHSSIRFSIGRFTTEEEIDYAINIIRKNIGRLRDMSPLWDMYKEGIDIKSIEWSH.

Pyridoxal 5'-phosphate is bound by residues A75–T76, N155, Q183, and S203–H205. Position 206 is an N6-(pyridoxal phosphate)lysine (K206). Residue T243 coordinates pyridoxal 5'-phosphate. Catalysis depends on C328, which acts as the Cysteine persulfide intermediate. C328 contacts [2Fe-2S] cluster.

The protein belongs to the class-V pyridoxal-phosphate-dependent aminotransferase family. NifS/IscS subfamily. As to quaternary structure, homodimer. Forms a heterotetramer with IscU, interacts with other sulfur acceptors. Pyridoxal 5'-phosphate serves as cofactor.

Its subcellular location is the cytoplasm. The enzyme catalyses (sulfur carrier)-H + L-cysteine = (sulfur carrier)-SH + L-alanine. Its pathway is cofactor biosynthesis; iron-sulfur cluster biosynthesis. Functionally, master enzyme that delivers sulfur to a number of partners involved in Fe-S cluster assembly, tRNA modification or cofactor biosynthesis. Catalyzes the removal of elemental sulfur atoms from cysteine to produce alanine. Functions as a sulfur delivery protein for Fe-S cluster synthesis onto IscU, an Fe-S scaffold assembly protein, as well as other S acceptor proteins. The protein is Cysteine desulfurase IscS of Psychromonas ingrahamii (strain DSM 17664 / CCUG 51855 / 37).